Here is an 848-residue protein sequence, read N- to C-terminus: Neurofilament medium polypeptide (848 aa).

A compositionally biased stretch (polar residues) spans Met-1 to Asn-10. The tract at residues Met-1–Ser-51 is disordered. The residue at position 2 (Ser-2) is an N-acetylserine. Residues Ser-2–Gln-102 are head. Residues Arg-21–Ser-44 show a composition bias toward low complexity. Ser-30 bears the Phosphoserine mark. The residue at position 42 (Arg-42) is an Omega-N-methylarginine. The O-linked (GlcNAc) threonine glycan is linked to Thr-47. A Phosphoserine modification is found at Ser-97. The IF rod domain occupies Glu-99–Phe-410. The tract at residues Leu-103–Leu-134 is coil 1A. The linker 1 stretch occupies residues Arg-135–Ala-147. The tract at residues Tyr-148–Gln-246 is coil 1B. Ser-224 bears the Phosphoserine mark. The tract at residues Ile-247–Asp-263 is linker 12. The interval Ile-264–Gln-285 is coil 2A. Residues Ala-286–Trp-289 form a linker 2 region. The coil 2B stretch occupies residues Phe-290–Phe-410. Position 318 is a phosphotyrosine (Tyr-318). Residues Ser-344, Ser-416, and Ser-428 each carry the phosphoserine modification. The interval Ser-411 to Asp-848 is tail. O-linked (GlcNAc) threonine glycosylation occurs at Thr-430. A phosphoserine mark is found at Ser-466 and Ser-482. The segment at Ser-482–Val-785 is disordered. The segment covering Glu-488–Glu-498 has biased composition (acidic residues). Basic and acidic residues predominate over residues Ala-499–Ala-509. Residues Ser-502 and Ser-506 each carry the phosphoserine modification. Acidic residues predominate over residues Lys-510–Glu-533. A compositionally biased stretch (basic and acidic residues) spans Gly-534 to Lys-553. Phosphoserine is present on residues Ser-537, Ser-545, Ser-550, and Ser-551. The span at Asp-554–Ala-576 shows a compositional bias: acidic residues. Thr-565 bears the Phosphothreonine mark. A compositionally biased stretch (basic and acidic residues) spans Lys-577–Lys-604. Phosphoserine occurs at positions 605 and 610. Composition is skewed to basic and acidic residues over residues Pro-611–Glu-677 and Ser-689–Glu-711. A Phosphothreonine modification is found at Thr-642. Phosphoserine is present on residues Ser-645, Ser-669, Ser-689, Ser-715, Ser-723, Ser-753, and Ser-769. 2 stretches are compositionally biased toward basic and acidic residues: residues Ser-720–Ile-732 and Thr-748–Gly-760. The span at Ala-771–Val-785 shows a compositional bias: basic and acidic residues.

This sequence belongs to the intermediate filament family. In terms of assembly, forms heterodimers with NEFL; which can further hetero-oligomerize (in vitro). Forms heterodimers with INA (in vitro). Post-translationally, there are a number of repeats of the tripeptide K-S-P, NFM is phosphorylated on a number of the serines in this motif. It is thought that phosphorylation of NFM results in the formation of interfilament cross bridges that are important in the maintenance of axonal caliber. Phosphorylation seems to play a major role in the functioning of the larger neurofilament polypeptides (NF-M and NF-H), the levels of phosphorylation being altered developmentally and coincidentally with a change in the neurofilament function. In terms of processing, phosphorylated in the head and rod regions by the PKC kinase PKN1, leading to the inhibition of polymerization. Expressed in the sciatic nerve (at protein level).

It localises to the cytoplasm. The protein resides in the cytoskeleton. Its subcellular location is the cell projection. It is found in the axon. In terms of biological role, neurofilaments usually contain three intermediate filament proteins: NEFL, NEFM, and NEFH which are involved in the maintenance of neuronal caliber. May additionally cooperate with the neuronal intermediate filament proteins PRPH and INA to form neuronal filamentous networks. This Mus musculus (Mouse) protein is Neurofilament medium polypeptide (Nefm).